A 339-amino-acid polypeptide reads, in one-letter code: Ribosomal RNA small subunit methyltransferase H (339 aa).

S-adenosyl-L-methionine contacts are provided by residues 36 to 38 (GGY), Asp-55, Phe-82, Asp-103, and Gln-110. The tract at residues 286-319 (GPIGPSEAEATANPRARSAKLRAGERTDAPIPEP) is disordered.

This sequence belongs to the methyltransferase superfamily. RsmH family.

The protein localises to the cytoplasm. The enzyme catalyses cytidine(1402) in 16S rRNA + S-adenosyl-L-methionine = N(4)-methylcytidine(1402) in 16S rRNA + S-adenosyl-L-homocysteine + H(+). Its function is as follows. Specifically methylates the N4 position of cytidine in position 1402 (C1402) of 16S rRNA. The chain is Ribosomal RNA small subunit methyltransferase H from Methylobacterium nodulans (strain LMG 21967 / CNCM I-2342 / ORS 2060).